We begin with the raw amino-acid sequence, 347 residues long: N-acetyl-gamma-glutamyl-phosphate reductase (347 aa).

Cysteine 150 is a catalytic residue.

Belongs to the NAGSA dehydrogenase family. Type 1 subfamily.

It localises to the cytoplasm. It carries out the reaction N-acetyl-L-glutamate 5-semialdehyde + phosphate + NADP(+) = N-acetyl-L-glutamyl 5-phosphate + NADPH + H(+). It participates in amino-acid biosynthesis; L-arginine biosynthesis; N(2)-acetyl-L-ornithine from L-glutamate: step 3/4. In terms of biological role, catalyzes the NADPH-dependent reduction of N-acetyl-5-glutamyl phosphate to yield N-acetyl-L-glutamate 5-semialdehyde. This Halothermothrix orenii (strain H 168 / OCM 544 / DSM 9562) protein is N-acetyl-gamma-glutamyl-phosphate reductase.